The sequence spans 1075 residues: Flocculation protein FLO5 (1075 aa).

An N-terminal signal peptide occupies residues 1 to 24; it reads MTIAHHCIFLVILAFLALINVASG. One can recognise a PA14 domain in the interval 74–249; that stretch reads GGQTDISIDY…GTTVSDNFEG (176 aa). N-linked (GlcNAc...) asparagine glycosylation is found at Asn-135, Asn-187, Asn-203, and Asn-262. Positions 197 to 240 are sugar recognition; sequence DGSLPDNITGTVYMYAGYYYPLKVVYSNAVSWGTLPISVELPDG. 8 repeat units span residues 278-322, 323-367, 368-412, 413-457, 458-502, 503-547, 548-592, and 593-637. The segment at 278–637 is 8 X 45 AA approximate tandem repeats, Thr-rich; it reads TTTEPWTGTF…RTPTTAISSS (360 aa). Low complexity-rich tracts occupy residues 322 to 345, 367 to 390, 457 to 480, and 547 to 570; these read TTTTEPWTGTFTSTSTEMTTVTGT. Disordered regions lie at residues 322–349, 366–394, 456–484, and 546–574; these read TTTTEPWTGTFTSTSTEMTTVTGTNGQP and ITTTTEPWTGTFTSTSTEMTTVTGTNGQP. Asn-663 carries N-linked (GlcNAc...) asparagine glycosylation. 2 tandem repeats follow at residues 667-686 and 687-706. The 2 X 20 AA approximate tandem repeats, Ser-rich stretch occupies residues 667-706; sequence VISSSVISSSVTSSLVTSSSFISSSVISSSTTTSTSIFSE. Residues 702 to 762 are compositionally biased toward low complexity; the sequence is SIFSESSTSS…SLPPVTSATT (61 aa). A disordered region spans residues 702-781; that stretch reads SIFSESSTSS…PATTTKTSEQ (80 aa). Asn-749 carries an N-linked (GlcNAc...) asparagine glycan. The segment covering 763–781 has biased composition (polar residues); the sequence is GQETASSLPPATTTKTSEQ. A run of 3 repeats spans residues 775 to 825, 847 to 897, and 898 to 948. The interval 775 to 948 is 3 X 51 AA approximate repeats, Ser/Thr-rich; that stretch reads TTKTSEQTTL…TVYPTWRPQT (174 aa). Residues 948 to 958 show a composition bias toward polar residues; sequence TTNEQSVSSKM. Disordered regions lie at residues 948–980 and 1016–1038; these read TTNEQSVSSKMNSATSETTTNTGAAETKTAVTS and SLTSSGLSTMSQQPRSTPASSMV. Composition is skewed to low complexity over residues 959 to 977 and 1016 to 1026; these read NSATSETTTNTGAAETKTA and SLTSSGLSTMS. A compositionally biased stretch (polar residues) spans 1027 to 1038; sequence QQPRSTPASSMV. The GPI-anchor amidated glycine moiety is linked to residue Gly-1052. Residues 1053–1075 constitute a propeptide, removed in mature form; sequence SANSLLAGSGLSVFIASLLLAII.

This sequence belongs to the flocculin family. Extensively O-glycosylated. Post-translationally, the GPI-anchor is attached to the protein in the endoplasmic reticulum and serves to target the protein to the cell surface. There, the glucosamine-inositol phospholipid moiety is cleaved off and the GPI-modified mannoprotein is covalently attached via its lipidless GPI glycan remnant to the 1,6-beta-glucan of the outer cell wall layer.

It localises to the secreted. The protein resides in the cell wall. Its subcellular location is the membrane. Cell wall protein that participates directly in adhesive cell-cell interactions during yeast flocculation, a reversible, asexual and Ca(2+)-dependent process in which cells adhere to form aggregates (flocs) consisting of thousands of cells. The lectin-like protein sticks out of the cell wall of flocculent cells and selectively binds mannose residues in the cell walls of adjacent cells. Activity is inhibited by mannose, but not by glucose, maltose, sucrose or galactose. This chain is Flocculation protein FLO5 (FLO5), found in Saccharomyces cerevisiae (strain ATCC 204508 / S288c) (Baker's yeast).